Here is a 317-residue protein sequence, read N- to C-terminus: Retinol dehydrogenase 16 (317 aa).

33–57 provides a ligand contact to NAD(+); that stretch reads FITGCDSGFGKLLARQLDARGLRVL. Ser-164 contacts substrate. The active-site Proton acceptor is Tyr-176. Residues 289–309 traverse the membrane as a helical segment; sequence LLYLPMSYMPTFLVDAIMYWV.

Belongs to the short-chain dehydrogenases/reductases (SDR) family. Homodimer. In terms of processing, not N-glycosylated. As to expression, highly expressed in adult liver (at protein level). Detected in endometrium, liver and foreskin. Detected in the spineous layers of adult skin, and at lower levels in basal and granular skin layers. Detected in fetal liver and lung.

The protein localises to the microsome membrane. It is found in the endoplasmic reticulum membrane. The enzyme catalyses all-trans-retinol--[retinol-binding protein] + NAD(+) = all-trans-retinal--[retinol-binding protein] + NADH + H(+). It catalyses the reaction all-trans-retinol + NAD(+) = all-trans-retinal + NADH + H(+). The catalysed reaction is 13-cis-retinol + NAD(+) = 13-cis-retinal + NADH + H(+). It carries out the reaction 11-cis-retinol + NAD(+) = 11-cis-retinal + NADH + H(+). The enzyme catalyses 9-cis-retinol + NAD(+) = 9-cis-retinal + NADH + H(+). It catalyses the reaction 5alpha-androstane-3alpha,17beta-diol + NAD(+) = 17beta-hydroxy-5alpha-androstan-3-one + NADH + H(+). The catalysed reaction is androsterone + NAD(+) = 5alpha-androstan-3,17-dione + NADH + H(+). It participates in cofactor metabolism; retinol metabolism. Its activity is regulated as follows. Inhibited by citral, perillyl alcohol, geraniol, farnesol and geranyl geraniol. In terms of biological role, oxidoreductase with a preference for NAD. Oxidizes all-trans-retinol, 9-cis-retinol, 11-cis-retinol and 13-cis-retinol to the corresponding aldehydes. Has higher activity towards CRBP-bound retinol than with free retinol. Also oxidizes 3-alpha-hydroxysteroids. Oxidizes androstanediol and androsterone to dihydrotestosterone and androstanedione. Can also catalyze the reverse reaction. This is Retinol dehydrogenase 16 from Homo sapiens (Human).